The sequence spans 82 residues: Small ribosomal subunit protein bS18 (82 aa).

Residues 1–20 (MVDINQIPTRRPFHRRHKTC) are disordered.

It belongs to the bacterial ribosomal protein bS18 family. Part of the 30S ribosomal subunit. Forms a tight heterodimer with protein bS6.

Its function is as follows. Binds as a heterodimer with protein bS6 to the central domain of the 16S rRNA, where it helps stabilize the platform of the 30S subunit. The chain is Small ribosomal subunit protein bS18 from Brucella suis (strain ATCC 23445 / NCTC 10510).